We begin with the raw amino-acid sequence, 901 residues long: Pyruvate, phosphate dikinase (901 aa).

Residues 1-321 form an N-terminal region; that stretch reads MNIAKSIHFL…WLIEQKPVEA (321 aa). Residues 322–380 form a linker 1 region; the sequence is KSTISLVRLLLDLYEREVVDAEYVVKSVKPGQLNEILHPVIDMTSVTGLKSSQGGIIGV. Positions 381–482 are central; that stretch reads PGAAVGRVYF…TINEGDFVTL (102 aa). The residue at position 440 (S440) is a Phosphoserine; by PDRP1. The active-site Tele-phosphohistidine intermediate is the H442. Residues 483–522 form a linker 2 region; it reads NVPYYGESTLYMGAAQLIEPDPETSGLVSFIELAKGFVRS. The tract at residues 523–901 is C-terminal; it reads FHVRANADSP…SAKSGGRRAR (379 aa). The substrate site is built by R550, R606, E750, G771, T772, N773, and D774. A Mg(2+)-binding site is contributed by E750. D774 is a Mg(2+) binding site. Catalysis depends on C835, which acts as the Proton donor. Positions 879–901 are disordered; that stretch reads EKEGRKPAWRGRSSAKSGGRRAR.

This sequence belongs to the PEP-utilizing enzyme family. Homodimer. It depends on Mg(2+) as a cofactor. In terms of processing, phosphorylation of Ser-440 in the dark inactivates the enzyme. Dephosphorylation upon light stimulation reactivates the enzyme.

It carries out the reaction pyruvate + phosphate + ATP = phosphoenolpyruvate + AMP + diphosphate + H(+). With respect to regulation, activated by light-induced dephosphorylation. Inhibited by dark-induced phosphorylation. Both reactions are catalyzed by PDRP1. In terms of biological role, catalyzes the reversible phosphorylation of pyruvate and phosphate. This chain is Pyruvate, phosphate dikinase (ppdK), found in Treponema pallidum (strain Nichols).